Consider the following 323-residue polypeptide: Phosphate acyltransferase (323 aa).

The protein belongs to the PlsX family. Homodimer. Probably interacts with PlsY.

It localises to the cytoplasm. The enzyme catalyses a fatty acyl-[ACP] + phosphate = an acyl phosphate + holo-[ACP]. The protein operates within lipid metabolism; phospholipid metabolism. Catalyzes the reversible formation of acyl-phosphate (acyl-PO(4)) from acyl-[acyl-carrier-protein] (acyl-ACP). This enzyme utilizes acyl-ACP as fatty acyl donor, but not acyl-CoA. The protein is Phosphate acyltransferase of Finegoldia magna (strain ATCC 29328 / DSM 20472 / WAL 2508) (Peptostreptococcus magnus).